A 384-amino-acid polypeptide reads, in one-letter code: Dual specificity protein phosphatase 5 (384 aa).

The Rhodanese domain occupies 19 to 141 (AEARCVVLDC…FYSQYPECCV (123 aa)). A Nuclear localization signal motif is present at residues 53-74 (RRARGGAVSARYVLADEAARAR). Positions 178–319 (GPVEILPFLY…LLQYESEILP (142 aa)) constitute a Tyrosine-protein phosphatase domain. Catalysis depends on Cys263, which acts as the Phosphocysteine intermediate.

Belongs to the protein-tyrosine phosphatase family. Non-receptor class dual specificity subfamily.

Its subcellular location is the nucleus. The catalysed reaction is O-phospho-L-tyrosyl-[protein] + H2O = L-tyrosyl-[protein] + phosphate. It carries out the reaction O-phospho-L-seryl-[protein] + H2O = L-seryl-[protein] + phosphate. It catalyses the reaction O-phospho-L-threonyl-[protein] + H2O = L-threonyl-[protein] + phosphate. Functionally, dual specificity protein phosphatase; active with phosphotyrosine, phosphoserine and phosphothreonine residues. The highest relative activity is toward ERK1. The protein is Dual specificity protein phosphatase 5 (Dusp5) of Rattus norvegicus (Rat).